We begin with the raw amino-acid sequence, 112 residues long: Photosystem II reaction center Psb28 protein (112 aa).

This sequence belongs to the Psb28 family. In terms of assembly, part of the photosystem II complex.

It localises to the cellular thylakoid membrane. The polypeptide is Photosystem II reaction center Psb28 protein (Synechococcus elongatus (strain ATCC 33912 / PCC 7942 / FACHB-805) (Anacystis nidulans R2)).